Reading from the N-terminus, the 243-residue chain is Zinc import ATP-binding protein ZnuC (243 aa).

The ABC transporter domain occupies 4–219; that stretch reads IAAHHLAVRR…PEYRALFGHG (216 aa). An ATP-binding site is contributed by 36 to 43; that stretch reads GPNGSGKS.

Belongs to the ABC transporter superfamily. Zinc importer (TC 3.A.1.15.5) family. The complex is composed of two ATP-binding proteins (ZnuC), two transmembrane proteins (ZnuB) and a solute-binding protein (ZnuA).

The protein localises to the cell inner membrane. The catalysed reaction is Zn(2+)(out) + ATP(in) + H2O(in) = Zn(2+)(in) + ADP(in) + phosphate(in) + H(+)(in). Its function is as follows. Part of the ABC transporter complex ZnuABC involved in zinc import. Responsible for energy coupling to the transport system. The polypeptide is Zinc import ATP-binding protein ZnuC (Cereibacter sphaeroides (strain ATCC 17023 / DSM 158 / JCM 6121 / CCUG 31486 / LMG 2827 / NBRC 12203 / NCIMB 8253 / ATH 2.4.1.) (Rhodobacter sphaeroides)).